Reading from the N-terminus, the 276-residue chain is NH(3)-dependent NAD(+) synthetase (276 aa).

Residue 43–50 participates in ATP binding; that stretch reads GISGGVDS. Asp-49 lines the Mg(2+) pocket. Residue Arg-146 participates in deamido-NAD(+) binding. Thr-166 is a binding site for ATP. Glu-171 is a binding site for Mg(2+). Deamido-NAD(+) is bound by residues Lys-179 and Asp-186. Lys-195 and Thr-217 together coordinate ATP. Position 266–267 (266–267) interacts with deamido-NAD(+); that stretch reads HK.

Belongs to the NAD synthetase family. In terms of assembly, homodimer.

The enzyme catalyses deamido-NAD(+) + NH4(+) + ATP = AMP + diphosphate + NAD(+) + H(+). It participates in cofactor biosynthesis; NAD(+) biosynthesis; NAD(+) from deamido-NAD(+) (ammonia route): step 1/1. Its function is as follows. Catalyzes the ATP-dependent amidation of deamido-NAD to form NAD. Uses ammonia as a nitrogen source. This chain is NH(3)-dependent NAD(+) synthetase, found in Psychromonas ingrahamii (strain DSM 17664 / CCUG 51855 / 37).